The primary structure comprises 606 residues: Melanoma-associated antigen D2 (606 aa).

2 disordered regions span residues 1-29 (MSDT…MMQT) and 52-204 (SEDV…GGRR). The residue at position 2 (serine 2) is an N-acetylserine. Serine 5 carries the phosphoserine modification. Phosphothreonine is present on threonine 72. Polar residues predominate over residues 79 to 100 (PATQASSTTQLTDTQVLATENK). Basic and acidic residues predominate over residues 122–131 (ETKKVSHVAD). Residues 142–164 (EAAPSQASADEPEPESAAAQSQE) show a composition bias toward low complexity. Serine 157 is modified (phosphoserine). Residues 171–181 (KVKAKKARKVK) are compositionally biased toward basic residues. A phosphoserine mark is found at serine 190, serine 191, serine 194, serine 197, serine 244, and serine 247. Positions 248-260 (PKARRGKARRRAA) are enriched in basic residues. A disordered region spans residues 248 to 275 (PKARRGKARRRAAKLQSSQEPEAPPPRD). Serine 264 and serine 265 each carry phosphoserine. Residues 279–478 (LQGRANDLVK…KEWAAQYREA (200 aa)) form the MAGE domain. A disordered region spans residues 534–563 (GAEAKAKAQESGSASTGASTSTNNSASASA).

As to quaternary structure, interacts with GNAS.

Regulates the expression, localization to the plasma membrane and function of the sodium chloride cotransporters SLC12A1 and SLC12A3, two key components of salt reabsorption in the distal renal tubule. The chain is Melanoma-associated antigen D2 (MAGED2) from Pongo abelii (Sumatran orangutan).